The following is a 244-amino-acid chain: Cyclin-Q (244 aa).

It belongs to the cyclin family. Cyclin-like FAM58 subfamily.

Its function is as follows. May be an activating cyclin for the cyclin-associated kinase CDK10. In Xenopus laevis (African clawed frog), this protein is Cyclin-Q (ccnq).